We begin with the raw amino-acid sequence, 692 residues long: Methionine--tRNA ligase (692 aa).

A 'HIGH' region motif is present at residues 15-25 (PYANGPIHLGH). Residues Cys-146, Cys-149, Cys-159, and Cys-162 each contribute to the Zn(2+) site. The 'KMSKS' region signature appears at 332 to 336 (KMSKS). Lys-335 serves as a coordination point for ATP. Residues 552–577 (TTEAAPEKKAKKSAETADVAVDTRSP) are disordered. The span at 556–566 (APEKKAKKSAE) shows a compositional bias: basic and acidic residues. A tRNA-binding domain is found at 591–692 (DFAKLDLRIA…EGAQPGMRVK (102 aa)).

This sequence belongs to the class-I aminoacyl-tRNA synthetase family. MetG type 1 subfamily. In terms of assembly, homodimer. Requires Zn(2+) as cofactor.

The protein resides in the cytoplasm. The enzyme catalyses tRNA(Met) + L-methionine + ATP = L-methionyl-tRNA(Met) + AMP + diphosphate. Is required not only for elongation of protein synthesis but also for the initiation of all mRNA translation through initiator tRNA(fMet) aminoacylation. The sequence is that of Methionine--tRNA ligase from Shewanella sediminis (strain HAW-EB3).